The primary structure comprises 415 residues: Tyrosine--tRNA ligase (415 aa).

A 'HIGH' region motif is present at residues 54 to 63; sequence PTGTDIHIGH. The 'KMSKS' region motif lies at 248-252; sequence KMSKS. Lys-251 serves as a coordination point for ATP. The S4 RNA-binding domain maps to 351-415; it reads AKAFYLFSKM…GKKKFLRVST (65 aa).

It belongs to the class-I aminoacyl-tRNA synthetase family. TyrS type 2 subfamily. As to quaternary structure, homodimer.

It localises to the cytoplasm. The catalysed reaction is tRNA(Tyr) + L-tyrosine + ATP = L-tyrosyl-tRNA(Tyr) + AMP + diphosphate + H(+). In terms of biological role, catalyzes the attachment of tyrosine to tRNA(Tyr) in a two-step reaction: tyrosine is first activated by ATP to form Tyr-AMP and then transferred to the acceptor end of tRNA(Tyr). The polypeptide is Tyrosine--tRNA ligase (Prochlorococcus marinus (strain NATL2A)).